Here is a 245-residue protein sequence, read N- to C-terminus: Sugar fermentation stimulation protein homolog (245 aa).

It belongs to the SfsA family.

In Rhodospirillum rubrum (strain ATCC 11170 / ATH 1.1.1 / DSM 467 / LMG 4362 / NCIMB 8255 / S1), this protein is Sugar fermentation stimulation protein homolog.